The chain runs to 321 residues: MSDALLNAGRQTLMLELQEASRLPERLGDDFVRAANIIIHCEGKVIVSGIGKSGHIGKKIAATLASTGTPAFFVHPAEALHGDLGMIESRDVMLFISYSGGAKELDLIIPRLEDKSVALLAMTGKPHSPLGRAAKAVLDISVEREACPMHLAPTSSTVNTLMMGDALAMAVMQARGFNEEDFARSHPAGALGARLLNNVHHLMRQGDAIPQVMLATSVMDAMLELSRTGLGLVAVCDEQHVVKGVFTDGDLRRWLVGGGALTTPVSEAMTPNGITLQAQSRAIDAKELLMKRKITAAPVVDENGKLTGAINLQDFYQAGII.

Residues 34 to 177 (AANIIIHCEG…AMAVMQARGF (144 aa)) form the SIS domain. 49–54 (GIGKSG) serves as a coordination point for ATP. Substrate is bound by residues 68-69 (GT), His75, His81, 107-116 (LIIPRLEDKS), and 141-143 (SVE). Position 75 (His75) interacts with Zn(2+). The region spanning 203–261 (MRQGDAIPQVMLATSVMDAMLELSRTGLGLVAVCDEQHVVKGVFTDGDLRRWLVGGGAL) is the CBS 1 domain. Glu267 contributes to the substrate binding site. One can recognise a CBS 2 domain in the interval 269–321 (MTPNGITLQAQSRAIDAKELLMKRKITAAPVVDENGKLTGAINLQDFYQAGII).

It belongs to the SIS family. GutQ/KpsF subfamily. As to quaternary structure, homotetramer.

The enzyme catalyses D-arabinose 5-phosphate = D-ribulose 5-phosphate. Functionally, catalyzes the reversible aldol-ketol isomerization between D-ribulose 5-phosphate (Ru5P) and D-arabinose 5-phosphate (A5P). It is also able of sustaining the biosynthetic pathway of 3-deoxy-D-manno-octulosonate (KDO), a unique 8-carbon sugar component of lipopolysaccharides (LPSs). The protein is Arabinose 5-phosphate isomerase GutQ (gutQ) of Salmonella typhi.